The sequence spans 391 residues: Nicotinate phosphoribosyltransferase (391 aa).

A Phosphohistidine; by autocatalysis modification is found at His-216.

Belongs to the NAPRTase family. Transiently phosphorylated on a His residue during the reaction cycle. Phosphorylation strongly increases the affinity for substrates and increases the rate of nicotinate D-ribonucleotide production. Dephosphorylation regenerates the low-affinity form of the enzyme, leading to product release.

It carries out the reaction nicotinate + 5-phospho-alpha-D-ribose 1-diphosphate + ATP + H2O = nicotinate beta-D-ribonucleotide + ADP + phosphate + diphosphate. It participates in cofactor biosynthesis; NAD(+) biosynthesis; nicotinate D-ribonucleotide from nicotinate: step 1/1. Functionally, catalyzes the synthesis of beta-nicotinate D-ribonucleotide from nicotinate and 5-phospho-D-ribose 1-phosphate at the expense of ATP. This is Nicotinate phosphoribosyltransferase from Bordetella petrii (strain ATCC BAA-461 / DSM 12804 / CCUG 43448).